We begin with the raw amino-acid sequence, 121 residues long: Structural protein p14.5 (121 aa).

Disordered stretches follow at residues 1 to 24 and 84 to 121; these read MADF…IGSL and TSLV…HKSK. An N-acetylalanine; by host modification is found at A2. Basic residues predominate over residues 104–121; sequence KPKKKKHLFPKLSSHKSK.

The protein belongs to the asfivirus structural protein p14.5 family. In terms of assembly, interacts with the major capsid protein. Interacts with host IRF3; this interaction interferes with the recruitment of IRF3 to TBK1. Acetylated.

Its subcellular location is the virion. Structural protein required for transport of intracellular particles from the assembly sites to the plasma membrane. Binds to both ssDNA and dsDNA. Suppressed the activation of the cGAS/STING pathway by interfering with the recruitment of IRF3 to TBK1, which in turn suppresses IRF3 phosphorylation, decreasing interferon production. The protein is Structural protein p14.5 of Ornithodoros (relapsing fever ticks).